The primary structure comprises 142 residues: Large ribosomal subunit protein uL11 (142 aa).

Belongs to the universal ribosomal protein uL11 family. Part of the ribosomal stalk of the 50S ribosomal subunit. Interacts with L10 and the large rRNA to form the base of the stalk. L10 forms an elongated spine to which L12 dimers bind in a sequential fashion forming a multimeric L10(L12)X complex. Post-translationally, one or more lysine residues are methylated.

Forms part of the ribosomal stalk which helps the ribosome interact with GTP-bound translation factors. The sequence is that of Large ribosomal subunit protein uL11 from Bartonella bacilliformis (strain ATCC 35685 / KC583 / Herrer 020/F12,63).